A 158-amino-acid chain; its full sequence is uncharacterized protein (158 aa).

This is an uncharacterized protein from Saccharolobus islandicus (Sulfolobus islandicus).